The primary structure comprises 371 residues: Queuine tRNA-ribosyltransferase (371 aa).

Residue D90 is the Proton acceptor of the active site. Residues 90–94 (DSGGF), D144, Q189, and G215 contribute to the substrate site. An RNA binding region spans residues 246–252 (GVGTPEN). D265 (nucleophile) is an active-site residue. The segment at 270-274 (TRNAR) is RNA binding; important for wobble base 34 recognition. C303, C305, C308, and H334 together coordinate Zn(2+).

It belongs to the queuine tRNA-ribosyltransferase family. Homodimer. Within each dimer, one monomer is responsible for RNA recognition and catalysis, while the other monomer binds to the replacement base PreQ1. It depends on Zn(2+) as a cofactor.

It catalyses the reaction 7-aminomethyl-7-carbaguanine + guanosine(34) in tRNA = 7-aminomethyl-7-carbaguanosine(34) in tRNA + guanine. It participates in tRNA modification; tRNA-queuosine biosynthesis. In terms of biological role, catalyzes the base-exchange of a guanine (G) residue with the queuine precursor 7-aminomethyl-7-deazaguanine (PreQ1) at position 34 (anticodon wobble position) in tRNAs with GU(N) anticodons (tRNA-Asp, -Asn, -His and -Tyr). Catalysis occurs through a double-displacement mechanism. The nucleophile active site attacks the C1' of nucleotide 34 to detach the guanine base from the RNA, forming a covalent enzyme-RNA intermediate. The proton acceptor active site deprotonates the incoming PreQ1, allowing a nucleophilic attack on the C1' of the ribose to form the product. After dissociation, two additional enzymatic reactions on the tRNA convert PreQ1 to queuine (Q), resulting in the hypermodified nucleoside queuosine (7-(((4,5-cis-dihydroxy-2-cyclopenten-1-yl)amino)methyl)-7-deazaguanosine). The chain is Queuine tRNA-ribosyltransferase from Helicobacter pylori (strain J99 / ATCC 700824) (Campylobacter pylori J99).